Here is a 1070-residue protein sequence, read N- to C-terminus: DNA-directed RNA polymerase subunit beta (1070 aa).

This sequence belongs to the RNA polymerase beta chain family. As to quaternary structure, in plastids the minimal PEP RNA polymerase catalytic core is composed of four subunits: alpha, beta, beta', and beta''. When a (nuclear-encoded) sigma factor is associated with the core the holoenzyme is formed, which can initiate transcription.

Its subcellular location is the plastid. The protein localises to the chloroplast. The catalysed reaction is RNA(n) + a ribonucleoside 5'-triphosphate = RNA(n+1) + diphosphate. DNA-dependent RNA polymerase catalyzes the transcription of DNA into RNA using the four ribonucleoside triphosphates as substrates. In Phaseolus vulgaris (Kidney bean), this protein is DNA-directed RNA polymerase subunit beta.